The chain runs to 667 residues: MSNRRETRAQAQQFIDNLKPLQHPNSEKVYLEGSRPDLKVGMRQIHQSDTLVAGDEANPVFEANPPLKVYDCAGAYSDPDANIDVRKGLEKFRENWIEERGDTVQLTSASSGFTQQRLADDGLDHLRFESLLPPRRAKEGKRVTQLHYARQGIITPEMEYIAIRENMAKSEVTDPILTQKDKGESFGAVIGEPITAEFVRQEIARGRAIIPLNINHPEAEPMIIGRNFLVKVNANIGNSAVTSSIEEEVEKLVWSTRWGADTVMDLSTGRYIHETREWIIRNSPVPIGTVPIYQALEKVNGVAEDLNWETFRDTLIEQAEQGVDYFTIHAGVLLRYVPMTAKRLTGIVSRGGSIMAKWCLSHHKENFLYEHFREICEICAAYDVSLSLGDGMRPGSIADANDEAQFSELETLGKLVKVAWEYDVQTIIEGPGHIPMNLIKENMDKQLEVCDEAPFYTLGPQTTDIAPGYDHFTSGIGAAMIAWYGCAMLCYVTPKEHLGLPNKDDVKQGLIAYKIAAHAGDVAKGHPSAQIRDNALSKARFEFRWEDQYNLGLDPETARAYHDESLPQESAKVAHFCSMCGPKFCSMKITQEVRDYAAAQEREAEARVIDIKSATEYDSYTGSESDTAKRASQREQGMAQMSAEFKAKGAELYHEASHKQPDVALED.

Substrate is bound by residues Asn-235, Met-264, Tyr-293, His-329, 349–351 (SRG), 390–393 (DGMR), and Glu-429. His-433 contributes to the Zn(2+) binding site. Residue Tyr-456 coordinates substrate. His-497 lines the Zn(2+) pocket. [4Fe-4S] cluster-binding residues include Cys-577, Cys-580, and Cys-585. The tract at residues 618–642 (DSYTGSESDTAKRASQREQGMAQMS) is disordered.

This sequence belongs to the ThiC family. As to quaternary structure, homodimer. The cofactor is [4Fe-4S] cluster.

The catalysed reaction is 5-amino-1-(5-phospho-beta-D-ribosyl)imidazole + S-adenosyl-L-methionine = 4-amino-2-methyl-5-(phosphooxymethyl)pyrimidine + CO + 5'-deoxyadenosine + formate + L-methionine + 3 H(+). It participates in cofactor biosynthesis; thiamine diphosphate biosynthesis. Catalyzes the synthesis of the hydroxymethylpyrimidine phosphate (HMP-P) moiety of thiamine from aminoimidazole ribotide (AIR) in a radical S-adenosyl-L-methionine (SAM)-dependent reaction. The sequence is that of Phosphomethylpyrimidine synthase from Shewanella pealeana (strain ATCC 700345 / ANG-SQ1).